Here is a 232-residue protein sequence, read N- to C-terminus: Phosphatidylserine decarboxylase proenzyme (232 aa).

S190 serves as the catalytic Schiff-base intermediate with substrate; via pyruvic acid. Pyruvic acid (Ser); by autocatalysis is present on S190.

This sequence belongs to the phosphatidylserine decarboxylase family. PSD-A subfamily. As to quaternary structure, heterodimer of a large membrane-associated beta subunit and a small pyruvoyl-containing alpha subunit. Requires pyruvate as cofactor. Post-translationally, is synthesized initially as an inactive proenzyme. Formation of the active enzyme involves a self-maturation process in which the active site pyruvoyl group is generated from an internal serine residue via an autocatalytic post-translational modification. Two non-identical subunits are generated from the proenzyme in this reaction, and the pyruvate is formed at the N-terminus of the alpha chain, which is derived from the carboxyl end of the proenzyme. The post-translation cleavage follows an unusual pathway, termed non-hydrolytic serinolysis, in which the side chain hydroxyl group of the serine supplies its oxygen atom to form the C-terminus of the beta chain, while the remainder of the serine residue undergoes an oxidative deamination to produce ammonia and the pyruvoyl prosthetic group on the alpha chain.

The protein localises to the cell membrane. The enzyme catalyses a 1,2-diacyl-sn-glycero-3-phospho-L-serine + H(+) = a 1,2-diacyl-sn-glycero-3-phosphoethanolamine + CO2. Its pathway is phospholipid metabolism; phosphatidylethanolamine biosynthesis; phosphatidylethanolamine from CDP-diacylglycerol: step 2/2. Functionally, catalyzes the formation of phosphatidylethanolamine (PtdEtn) from phosphatidylserine (PtdSer). The chain is Phosphatidylserine decarboxylase proenzyme from Agrobacterium fabrum (strain C58 / ATCC 33970) (Agrobacterium tumefaciens (strain C58)).